We begin with the raw amino-acid sequence, 396 residues long: 1-deoxy-D-xylulose 5-phosphate reductoisomerase (396 aa).

NADPH is bound by residues threonine 17, glycine 18, serine 19, isoleucine 20, asparagine 47, and asparagine 130. Lysine 131 serves as a coordination point for 1-deoxy-D-xylulose 5-phosphate. Glutamate 132 is an NADPH binding site. Aspartate 156 is a Mn(2+) binding site. 1-deoxy-D-xylulose 5-phosphate contacts are provided by serine 157, glutamate 158, serine 182, and histidine 205. Glutamate 158 lines the Mn(2+) pocket. Glycine 211 contributes to the NADPH binding site. The 1-deoxy-D-xylulose 5-phosphate site is built by serine 218, asparagine 223, lysine 224, and glutamate 227. Glutamate 227 is a Mn(2+) binding site.

The protein belongs to the DXR family. The cofactor is Mg(2+). Mn(2+) serves as cofactor.

It catalyses the reaction 2-C-methyl-D-erythritol 4-phosphate + NADP(+) = 1-deoxy-D-xylulose 5-phosphate + NADPH + H(+). It participates in isoprenoid biosynthesis; isopentenyl diphosphate biosynthesis via DXP pathway; isopentenyl diphosphate from 1-deoxy-D-xylulose 5-phosphate: step 1/6. Catalyzes the NADPH-dependent rearrangement and reduction of 1-deoxy-D-xylulose-5-phosphate (DXP) to 2-C-methyl-D-erythritol 4-phosphate (MEP). This chain is 1-deoxy-D-xylulose 5-phosphate reductoisomerase, found in Rhizobium etli (strain CIAT 652).